Consider the following 327-residue polypeptide: Flap endonuclease 1 (327 aa).

The tract at residues 1–98 (MGVKLKDIIQ…ETIDQRRQTR (98 aa)) is N-domain. 7 residues coordinate Mg(2+): aspartate 27, aspartate 80, glutamate 152, glutamate 154, aspartate 173, aspartate 175, and aspartate 226. Residues 116–246 (EARKYAMRSS…KTALKLAKKG (131 aa)) form an I-domain region. Positions 319–327 (SQKSLEDWF) are interaction with PCNA.

It belongs to the XPG/RAD2 endonuclease family. FEN1 subfamily. As to quaternary structure, interacts with PCNA. PCNA stimulates the nuclease activity without altering cleavage specificity. The cofactor is Mg(2+).

In terms of biological role, structure-specific nuclease with 5'-flap endonuclease and 5'-3' exonuclease activities involved in DNA replication and repair. During DNA replication, cleaves the 5'-overhanging flap structure that is generated by displacement synthesis when DNA polymerase encounters the 5'-end of a downstream Okazaki fragment. Binds the unpaired 3'-DNA end and kinks the DNA to facilitate 5' cleavage specificity. Cleaves one nucleotide into the double-stranded DNA from the junction in flap DNA, leaving a nick for ligation. Also involved in the base excision repair (BER) pathway. Acts as a genome stabilization factor that prevents flaps from equilibrating into structures that lead to duplications and deletions. Also possesses 5'-3' exonuclease activity on nicked or gapped double-stranded DNA. The chain is Flap endonuclease 1 from Methanobrevibacter smithii (strain ATCC 35061 / DSM 861 / OCM 144 / PS).